Consider the following 212-residue polypeptide: Leucine efflux protein (212 aa).

6 consecutive transmembrane segments (helical) span residues 12–32 (TYLVGAIFIVLVPGPNTLFVL), 49–69 (GVFIGDAVLMFLAWAGVATLI), 71–91 (TTPILFNIVRYLGAFYLLYLG), 122–142 (ILSLTNPKAILFYVSFFVQFI), 153–173 (FFILATTLELVSFCYLSFLII), and 188–208 (LAKVGNSLIGLMFVGFAARLA).

The protein belongs to the Rht family.

Its subcellular location is the cell inner membrane. It catalyses the reaction L-leucine(in) + H(+)(out) = L-leucine(out) + H(+)(in). In terms of biological role, exporter of leucine. The protein is Leucine efflux protein (leuE) of Shigella sonnei (strain Ss046).